We begin with the raw amino-acid sequence, 79 residues long: ATP synthase subunit c (79 aa).

The next 2 membrane-spanning stretches (helical) occupy residues 7 to 27 (VSGMAALGAGIAALACIGAGI) and 56 to 76 (IGSAFSEATAIYGLIIALFLI).

The protein belongs to the ATPase C chain family. In terms of assembly, F-type ATPases have 2 components, F(1) - the catalytic core - and F(0) - the membrane proton channel. F(1) has five subunits: alpha(3), beta(3), gamma(1), delta(1), epsilon(1). F(0) has three main subunits: a(1), b(2) and c(10-14). The alpha and beta chains form an alternating ring which encloses part of the gamma chain. F(1) is attached to F(0) by a central stalk formed by the gamma and epsilon chains, while a peripheral stalk is formed by the delta and b chains.

Its subcellular location is the cell membrane. F(1)F(0) ATP synthase produces ATP from ADP in the presence of a proton or sodium gradient. F-type ATPases consist of two structural domains, F(1) containing the extramembraneous catalytic core and F(0) containing the membrane proton channel, linked together by a central stalk and a peripheral stalk. During catalysis, ATP synthesis in the catalytic domain of F(1) is coupled via a rotary mechanism of the central stalk subunits to proton translocation. In terms of biological role, key component of the F(0) channel; it plays a direct role in translocation across the membrane. A homomeric c-ring of between 10-14 subunits forms the central stalk rotor element with the F(1) delta and epsilon subunits. In Clostridium botulinum (strain Hall / ATCC 3502 / NCTC 13319 / Type A), this protein is ATP synthase subunit c.